A 619-amino-acid polypeptide reads, in one-letter code: Transcription factor 7-like 2 (619 aa).

A compositionally biased stretch (gly residues) spans 1–11 (MPQLNGGGGDD). The segment at 1-53 (MPQLNGGGGDDLGANDELISFKDEGEQEEKSSENSSAERDLADVKSSLVNESE) is CTNNB1-binding. The interval 1-96 (MPQLNGGGGD…AKRQDGGLFK (96 aa)) is disordered. Basic and acidic residues predominate over residues 19–43 (ISFKDEGEQEEKSSENSSAERDLAD). Lys-22 participates in a covalent cross-link: Glycyl lysine isopeptide (Lys-Gly) (interchain with G-Cter in SUMO2). Over residues 47–57 (SLVNESETNQN) the composition is skewed to polar residues. Over residues 63 to 91 (EAERRPPPRSESFRDKSRESLEEAAKRQD) the composition is skewed to basic and acidic residues. Phosphothreonine; by NLK is present on residues Thr-201 and Thr-212. A mediates interaction with MAD2L2 region spans residues 201–395 (TPLITYSNEH…RRWHALSREE (195 aa)). Residues 318–328 (TVKQESSQSDV) show a composition bias toward polar residues. Disordered regions lie at residues 318-350 (TVKQ…KPHI), 420-441 (RDNY…TNEH), 496-547 (CLSP…AHLS), and 574-619 (DLPP…KSLE). A Glycyl lysine isopeptide (Lys-Gly) (interchain with G-Cter in SUMO) cross-link involves residue Lys-320. A compositionally biased stretch (basic and acidic residues) spans 335–346 (KHQDSKKEEEKK). The segment at residues 350 to 418 (IKKPLNAFML…LHMQLYPGWS (69 aa)) is a DNA-binding region (HMG box). The Nuclear localization signal motif lies at 425-430 (KKKKRK). A promoter-specific activation domain region spans residues 459 to 505 (SAPKKCRARFGLDQQNNWCGPCRRKKKCVRYIQGEGSCLSPPSSDGS). Positions 496–508 (CLSPPSSDGSLLD) are enriched in low complexity. Residue Lys-539 forms a Glycyl lysine isopeptide (Lys-Gly) (interchain with G-Cter in SUMO2) linkage. Over residues 574-603 (DLPPAALQPAAPSSSIAQPSTSSLHSHSSL) the composition is skewed to low complexity. The span at 604–619 (AGTQPQPLSLVTKSLE) shows a compositional bias: polar residues.

Belongs to the TCF/LEF family. In terms of assembly, interacts with TGFB1I1. Interacts with CTNNB1 (via the armadillo repeat); forms stable transcription complex. Interacts with EP300. Interacts with NLK. Interacts with CCDC85B (probably through the HMG box); prevents interaction with CTNNB1. Interacts with TNIK. Interacts with MAD2L2; prevents TCF7L2/TCF4 binding to promZIPK/DAPK3oters, negatively modulating its transcriptional activity. Interacts with ZIPK/DAPK3. Interacts with XIAP/BIRC4 and TLE3. Interacts with DDIT3/CHOP. The CTNNB1 and TCF7L2/TCF4 complex interacts with PML (isoform PML-4). Identified in a complex with CTNNB1 and FERMT2. Interacts with SPIN1. Interacts with C11orf84/SPINDOC in a SPIN1-dependent manner. Interacts with DAZAP2; the interaction results in localization of DAZAP2 to the nucleus. In vitro, phosphorylated by TNIK. In terms of processing, phosphorylated at Thr-201 and/or Thr-212 by NLK. Phosphorylation by NLK at these sites inhibits DNA-binding by TCF7L2/TCF4, thereby preventing transcriptional activation of target genes of the canonical Wnt/beta-catenin signaling pathway. Post-translationally, polysumoylated. Sumoylation is enhanced by PIAS family members and desumoylation is enhanced by SENP2. Sumoylation/desumoylation regulates TCF7L2/TCF4 transcription activity in the Wnt/beta-catenin signaling pathway without altering interaction with CTNNB1 nor binding to DNA. In terms of tissue distribution, detected in epithelium from small intestine, with the highest expression at the top of the crypts and a gradient of expression from crypt to villus. Detected in colon epithelium and colon cancer, and in epithelium from mammary gland and carcinomas derived therefrom.

Its subcellular location is the nucleus. It localises to the PML body. Functionally, participates in the Wnt signaling pathway and modulates MYC expression by binding to its promoter in a sequence-specific manner. Acts as a repressor in the absence of CTNNB1, and as activator in its presence. Activates transcription from promoters with several copies of the Tcf motif 5'-CCTTTGATC-3' in the presence of CTNNB1. TLE1, TLE2, TLE3 and TLE4 repress transactivation mediated by TCF7L2/TCF4 and CTNNB1. Expression of dominant-negative mutants results in cell-cycle arrest in G1. Necessary for the maintenance of the epithelial stem-cell compartment of the small intestine. This is Transcription factor 7-like 2 (TCF7L2) from Homo sapiens (Human).